Consider the following 175-residue polypeptide: MSFMVPTTFAAPQTYRLPCPTIQVQTLGPIVPSVWTIVSRYEPFRQLVVQAHLQDFLNDPQTIVTVMAPLCIPTSQTTQLVCTDASTSPTRVSVLDLSFEASLAMVQSVSVPGVLTTDTMNQSNYTAYRTHHPYRMLHVKSKPTILLNNTSHIVVGNVVASNGLVHIVDQFPMPI.

The 145-residue stretch at 28–172 folds into the FAS1 domain; the sequence is GPIVPSVWTI…GLVHIVDQFP (145 aa).

The protein is Putative FAS1 domain-containing protein 081L of Invertebrate iridescent virus 3 (IIV-3).